We begin with the raw amino-acid sequence, 432 residues long: Glycerophosphocholine acyltransferase 1 (432 aa).

Residues Met-1–Arg-110 lie on the Cytoplasmic side of the membrane. Residue Ser-78 is modified to Phosphoserine. Residues Leu-111–Gly-131 traverse the membrane as a helical segment. Position 132 (Arg-132) is a topological domain, lumenal. The chain crosses the membrane as a helical span at residues Phe-133 to Phe-153. Residues Tyr-154–His-162 are Cytoplasmic-facing. Residues Tyr-163–Phe-183 form a helical membrane-spanning segment. Residues Pro-184–Tyr-187 lie on the Lumenal side of the membrane. Residues Ser-188–Trp-208 form a helical membrane-spanning segment. The Cytoplasmic portion of the chain corresponds to Arg-209–Thr-221. Residues Ser-222 to Leu-242 traverse the membrane as a helical segment. At Glu-243–Asn-263 the chain is on the lumenal side. The chain crosses the membrane as a helical span at residues Ile-264–Leu-284. Over Lys-285–Pro-318 the chain is Cytoplasmic. A helical transmembrane segment spans residues Trp-319–Cys-339. Over Gly-340–Lys-346 the chain is Lumenal. The helical transmembrane segment at Leu-347–Ile-369 threads the bilayer. The Cytoplasmic segment spans residues Asp-370–Asp-432. Residues Leu-413–Asp-432 form a disordered region.

It belongs to the GPC1 family.

It localises to the membrane. It catalyses the reaction sn-glycerol 3-phosphocholine + an acyl-CoA = a 1-acyl-sn-glycero-3-phosphocholine + CoA. It carries out the reaction sn-glycero-3-phosphoethanolamine + an acyl-CoA = a monoacyl-sn-glycero-3-phosphoethanolamine + CoA. The enzyme catalyses sn-glycero-3-phosphoethanolamine + (9Z)-octadecenoyl-CoA = (9Z-octadecenoyl)-sn-glycero-3-phosphoethanolamine + CoA. The catalysed reaction is sn-glycerol 3-phosphocholine + hexadecanoyl-CoA = hexadecanoyl-sn-glycero-3-phosphocholine + CoA. It catalyses the reaction (9Z,12Z)-octadecadienoyl-CoA + sn-glycerol 3-phosphocholine = (9Z,12Z-octadecadienoyl)-sn-glycero-3-phosphocholine + CoA. It carries out the reaction (12R)-hydroxy-(9Z)-octadecenoyl-CoA + sn-glycerol 3-phosphocholine = (12R-hydroxy-9Z-octadecenoyl)-sn-glycero-3-phosphocholine + CoA. The enzyme catalyses (9Z,12Z,15Z)-octadecatrienoyl-CoA + sn-glycerol 3-phosphocholine = (9Z,12Z,15Z-octadecatrienoyl)-sn-glycero-3-phosphocholine + CoA. The catalysed reaction is sn-glycerol 3-phosphocholine + (9Z)-octadecenoyl-CoA = (9Z-octadecenoyl)-sn-glycero-3-phosphocholine + CoA. It catalyses the reaction 1-(9Z-octadecenoyl)-sn-glycero-3-phosphoethanolamine + sn-glycerol 3-phosphocholine = (9Z-octadecenoyl)-sn-glycero-3-phosphocholine + sn-glycero-3-phosphoethanolamine. With respect to regulation, the GPCAT activity is sensitive to N-ethylmaleimide, phenanthroline, and divalent cations including Ca(2+), Mg(2+), Mn(2+) and Zn(2+). The activity is also inhibited by glycerol-3-phosphate (G3P). Functionally, glycerophosphocholine acyltransferase (GPCAT) that utilizes acyl-CoA to acylate glycero-3-phosphocholine (GPC), forming lysophosphatidylcholine (LPC). Shows broad acyl specificities with a preference for 16:0-CoA, polyunsaturated acyl-CoA, and the hydroxylated ricinoleoyl-CoA. Also catalyzes the acylation of glycero-3-phosphoethanolamine (GPE) with acyl-CoA. In addition to acyl-CoA, GPCAT efficiently utilizes LPC and lysophosphatidylethanolamine (LPE) as acyl donors in the acylation of GPC. Contributes to the maintenance of phosphatidylcholine (PC) homeostasis and might also have specific functions in acyl editing of PC, such as transferring acyl groups modified at the sn-2 position of PC to the sn-1. Involved in postsynthetic PC remodeling that produces more saturated PC species. This chain is Glycerophosphocholine acyltransferase 1, found in Saccharomyces cerevisiae (strain ATCC 204508 / S288c) (Baker's yeast).